The primary structure comprises 222 residues: Ribonuclease HII (222 aa).

An RNase H type-2 domain is found at 32–222; the sequence is FHIAGVDEVG…LIKRYKEDIS (191 aa). A divalent metal cation is bound by residues Asp-38, Glu-39, and Asp-130.

This sequence belongs to the RNase HII family. It depends on Mn(2+) as a cofactor. Mg(2+) is required as a cofactor.

Its subcellular location is the cytoplasm. The catalysed reaction is Endonucleolytic cleavage to 5'-phosphomonoester.. In terms of biological role, endonuclease that specifically degrades the RNA of RNA-DNA hybrids. The polypeptide is Ribonuclease HII (Bartonella bacilliformis (strain ATCC 35685 / KC583 / Herrer 020/F12,63)).